Reading from the N-terminus, the 707-residue chain is Polyribonucleotide nucleotidyltransferase (707 aa).

Mg(2+)-binding residues include D487 and D493. The 60-residue stretch at 554–613 (PKILTMNINPDKIRDVIGPSGKQINKIIEDTGVKIDIEQDGTIFISSTDESSNQKAKKII) folds into the KH domain. Residues 623 to 691 (GQLYLGKVKR…KQGRVNLSRK (69 aa)) enclose the S1 motif domain.

The protein belongs to the polyribonucleotide nucleotidyltransferase family. Requires Mg(2+) as cofactor.

The protein resides in the cytoplasm. The catalysed reaction is RNA(n+1) + phosphate = RNA(n) + a ribonucleoside 5'-diphosphate. Functionally, involved in mRNA degradation. Catalyzes the phosphorolysis of single-stranded polyribonucleotides processively in the 3'- to 5'-direction. The chain is Polyribonucleotide nucleotidyltransferase from Bacillus velezensis (strain DSM 23117 / BGSC 10A6 / LMG 26770 / FZB42) (Bacillus amyloliquefaciens subsp. plantarum).